A 61-amino-acid chain; its full sequence is Large ribosomal subunit protein uL30 (61 aa).

The protein belongs to the universal ribosomal protein uL30 family. As to quaternary structure, part of the 50S ribosomal subunit.

The protein is Large ribosomal subunit protein uL30 of Maricaulis maris (strain MCS10) (Caulobacter maris).